Reading from the N-terminus, the 157-residue chain is 3-dehydroquinate dehydratase (157 aa).

Residue Y29 is the Proton acceptor of the active site. Residues N80, H86, and D93 each coordinate substrate. Residue H107 is the Proton donor of the active site. Substrate is bound by residues 108 to 109 and R118; that span reads IS.

The protein belongs to the type-II 3-dehydroquinase family. In terms of assembly, homododecamer.

The catalysed reaction is 3-dehydroquinate = 3-dehydroshikimate + H2O. Its pathway is metabolic intermediate biosynthesis; chorismate biosynthesis; chorismate from D-erythrose 4-phosphate and phosphoenolpyruvate: step 3/7. Functionally, catalyzes a trans-dehydration via an enolate intermediate. In Streptomyces coelicolor (strain ATCC BAA-471 / A3(2) / M145), this protein is 3-dehydroquinate dehydratase (aroQ).